Reading from the N-terminus, the 525-residue chain is Protein-serine O-palmitoleoyltransferase porcupine (525 aa).

Transmembrane regions (helical) follow at residues 83 to 103 (VMQY…LCLL), 125 to 145 (LIIL…LAAV), 159 to 179 (GAQV…LLIW), 220 to 240 (FAYL…WVSF), 260 to 280 (LLPN…VAPA), 301 to 318 (VRSS…LLVA), 395 to 415 (SLLH…AFLA), 467 to 487 (NLAF…VLLG), and 505 to 525 (QAGY…LFIS). Residue His398 is part of the active site.

Belongs to the membrane-bound acyltransferase family. Porcupine subfamily. Interacts with wg and Wnt5.

The protein localises to the endoplasmic reticulum membrane. It carries out the reaction [Wnt protein]-L-serine + (9Z)-hexadecenoyl-CoA = [Wnt protein]-O-(9Z)-hexadecenoyl-L-serine + CoA. Functionally, protein-serine O-palmitoleoyltransferase that acts as a key regulator of the Wnt signaling pathway by mediating the attachment of palmitoleate, a 16-carbon monounsaturated fatty acid (C16:1(9Z)), to Wnt proteins. Serine palmitoleoylation of Wnt proteins is required for efficient binding to frizzled receptors. Also facilitates the glycosylation of Wnt family members, including wg and Wnt5. The cotranslational disulfide bond formation of wg competes with the N-glycosylation. Porc stimulates the post-translational N-glycosylation by anchoring wg at the ER membrane, probably through acylation. The chain is Protein-serine O-palmitoleoyltransferase porcupine from Drosophila melanogaster (Fruit fly).